Here is a 130-residue protein sequence, read N- to C-terminus: Small ribosomal subunit protein uS9 (130 aa).

It belongs to the universal ribosomal protein uS9 family.

In Pasteurella multocida (strain Pm70), this protein is Small ribosomal subunit protein uS9.